Consider the following 259-residue polypeptide: Ribosomal RNA small subunit methyltransferase A (259 aa).

6 residues coordinate S-adenosyl-L-methionine: Asn13, Leu15, Gly40, Glu61, Asp85, and Asn103.

This sequence belongs to the class I-like SAM-binding methyltransferase superfamily. rRNA adenine N(6)-methyltransferase family. RsmA subfamily.

The protein resides in the cytoplasm. It carries out the reaction adenosine(1518)/adenosine(1519) in 16S rRNA + 4 S-adenosyl-L-methionine = N(6)-dimethyladenosine(1518)/N(6)-dimethyladenosine(1519) in 16S rRNA + 4 S-adenosyl-L-homocysteine + 4 H(+). In terms of biological role, specifically dimethylates two adjacent adenosines (A1518 and A1519) in the loop of a conserved hairpin near the 3'-end of 16S rRNA in the 30S particle. May play a critical role in biogenesis of 30S subunits. The sequence is that of Ribosomal RNA small subunit methyltransferase A from Neisseria meningitidis serogroup B (strain ATCC BAA-335 / MC58).